A 262-amino-acid polypeptide reads, in one-letter code: uncharacterized protein (262 aa).

The region spanning 5–223 (IKVENLTKYF…MAYIEYLDNG (219 aa)) is the ABC transporter domain. Residue 37–44 (GHNGAGKT) coordinates ATP.

Belongs to the ABC transporter superfamily.

This is an uncharacterized protein from Methanocaldococcus jannaschii (strain ATCC 43067 / DSM 2661 / JAL-1 / JCM 10045 / NBRC 100440) (Methanococcus jannaschii).